Here is a 271-residue protein sequence, read N- to C-terminus: Neurexophilin-1 (271 aa).

A signal peptide spans 1-21; that stretch reads MQAACWYVLLLLQPTVYLVTC. The interval 22–97 is II; the sequence is ANLTNGGKSE…WDWLRNSTDL (76 aa). 6 N-linked (GlcNAc...) asparagine glycosylation sites follow: Asn-23, Asn-68, Asn-93, Asn-146, Asn-156, and Asn-162. The interval 98 to 176 is III; sequence QEPRPRAKRR…LVPPTKIVEF (79 aa). An IV (linker domain) region spans residues 177-185; that stretch reads DLAQQTVID. The v (Cys-rich) stretch occupies residues 186-271; that stretch reads AKDSKSFNCR…HSDTPYFPSG (86 aa).

This sequence belongs to the neurexophilin family. In terms of processing, may be proteolytically processed at the boundary between the N-terminal non-conserved and the central conserved domain in neuron-like cells. Brain, only in a scattered subpopulation of neurons that probably represent inhibitory interneurons.

The protein resides in the secreted. In terms of biological role, may be signaling molecules that resemble neuropeptides. Ligand for alpha-neurexins. The protein is Neurexophilin-1 (Nxph1) of Mus musculus (Mouse).